The chain runs to 318 residues: NADH-ubiquinone oxidoreductase chain 1 (318 aa).

A run of 8 helical transmembrane segments spans residues 2–22 (FMIN…FLTL), 68–88 (ISMF…MWIP), 100–120 (LGVL…LWSG), 147–167 (AIIL…TLII), 172–192 (VWLI…TLAE), 217–237 (AGPF…MNIF), 253–273 (ELYT…FLWI), and 294–314 (LPLT…LSSI).

This sequence belongs to the complex I subunit 1 family.

The protein localises to the mitochondrion inner membrane. It catalyses the reaction a ubiquinone + NADH + 5 H(+)(in) = a ubiquinol + NAD(+) + 4 H(+)(out). Its function is as follows. Core subunit of the mitochondrial membrane respiratory chain NADH dehydrogenase (Complex I) that is believed to belong to the minimal assembly required for catalysis. Complex I functions in the transfer of electrons from NADH to the respiratory chain. The immediate electron acceptor for the enzyme is believed to be ubiquinone. The protein is NADH-ubiquinone oxidoreductase chain 1 (MT-ND1) of Ovis aries (Sheep).